Reading from the N-terminus, the 229-residue chain is UPF0758 protein Moth_0536 (229 aa).

Residues 107–229 (VIRNPRDVAG…FTSLKERNLL (123 aa)) form the MPN domain. The Zn(2+) site is built by His-178, His-180, and Asp-191. The short motif at 178–191 (HNHPSGDPTPSQED) is the JAMM motif element.

The protein belongs to the UPF0758 family.

The protein is UPF0758 protein Moth_0536 of Moorella thermoacetica (strain ATCC 39073 / JCM 9320).